The primary structure comprises 198 residues: Ribonuclease HII (198 aa).

Residues 14–198 form the RNase H type-2 domain; that stretch reads HMIVGVDEAG…FAPVAQLQLV (185 aa). 3 residues coordinate a divalent metal cation: aspartate 20, glutamate 21, and aspartate 110.

The protein belongs to the RNase HII family. Mn(2+) serves as cofactor. It depends on Mg(2+) as a cofactor.

The protein resides in the cytoplasm. The enzyme catalyses Endonucleolytic cleavage to 5'-phosphomonoester.. Endonuclease that specifically degrades the RNA of RNA-DNA hybrids. This Sphingopyxis alaskensis (strain DSM 13593 / LMG 18877 / RB2256) (Sphingomonas alaskensis) protein is Ribonuclease HII.